A 270-amino-acid chain; its full sequence is MSKIAKTAIISPKAEINKGVEIGEFCVIGDGVKLDDGVKLHNNVTLQGHTFIGKNTEIFPFAVLGTQPQDLKYKGEYSELIVGEDNLIREFCMINPGTEGGIKKTLIGDKNLLMAYVHVAHDCVIGSHCILANGVTLAGHIEIGDYVNIGGLTAIHQFVRIAKGCMIAGKSALGKDVPPYCTVEGNRAFIRGLNRHRMRQLLESKDIDFIYALYKRLFRPVPSLRESAKLELEEHANNPFVKEICSFILESSRGVAYKSSEYSSEEKQEE.

It belongs to the transferase hexapeptide repeat family. LpxA subfamily. Homotrimer.

It is found in the cytoplasm. It catalyses the reaction a (3R)-hydroxyacyl-[ACP] + UDP-N-acetyl-alpha-D-glucosamine = a UDP-3-O-[(3R)-3-hydroxyacyl]-N-acetyl-alpha-D-glucosamine + holo-[ACP]. It functions in the pathway glycolipid biosynthesis; lipid IV(A) biosynthesis; lipid IV(A) from (3R)-3-hydroxytetradecanoyl-[acyl-carrier-protein] and UDP-N-acetyl-alpha-D-glucosamine: step 1/6. Involved in the biosynthesis of lipid A, a phosphorylated glycolipid that anchors the lipopolysaccharide to the outer membrane of the cell. The sequence is that of Acyl-[acyl-carrier-protein]--UDP-N-acetylglucosamine O-acyltransferase from Helicobacter pylori (strain P12).